Here is a 1007-residue protein sequence, read N- to C-terminus: Serine/threonine-protein kinase PRP4 homolog (1007 aa).

The disordered stretch occupies residues 1 to 104 (MAATEPPSLR…PAKRTKLDDL (104 aa)). A2 is modified (N-acetylalanine). Phosphoserine occurs at positions 8, 21, 24, and 33. 2 stretches are compositionally biased toward basic residues: residues 40 to 60 (KHSRHKKKKHKHRSKHKKHKH) and 68 to 82 (KKHKHKHKHKKHKRK). Residues 83-92 (EVLDASDKEG) are compositionally biased toward basic and acidic residues. 2 positions are modified to phosphoserine: S88 and S94. An N6-acetyllysine; alternate modification is found at K100. A Glycyl lysine isopeptide (Lys-Gly) (interchain with G-Cter in SUMO2); alternate cross-link involves residue K100. A Glycyl lysine isopeptide (Lys-Gly) (interchain with G-Cter in SUMO2) cross-link involves residue K112. K118 participates in a covalent cross-link: Glycyl lysine isopeptide (Lys-Gly) (interchain with G-Cter in SUMO2); alternate. K118 is covalently cross-linked (Glycyl lysine isopeptide (Lys-Gly) (interchain with G-Cter in SUMO1); alternate). S132 carries the post-translational modification Phosphoserine. A Phosphotyrosine modification is found at Y141. Disordered regions lie at residues 141–535 (YESG…EDEE) and 560–583 (NISVPSEPSSPQSSTRSRSPSPDD). 3 positions are modified to phosphoserine: S143, S145, and S167. The span at 158 to 169 (GNRSSTRSSSTR) shows a compositional bias: low complexity. Residues K171 and K178 each participate in a glycyl lysine isopeptide (Lys-Gly) (interchain with G-Cter in SUMO2) cross-link. 2 stretches are compositionally biased toward basic residues: residues 180–203 (SAKKRSKSRSKERTRHRSDKRKSK) and 215–231 (RSKSKERRKSKSPSKRS). Phosphoserine is present on residues S240, S242, S258, S278, S292, and S294. Residues 248-271 (RSQEKVGKARSPADEKIKSEEKGK) are compositionally biased toward basic and acidic residues. Positions 294–303 (SPVDLRDKSK) are enriched in basic and acidic residues. Positions 304-315 (DRRSRSKERKSK) are enriched in basic residues. The span at 316–325 (RSEIDKEKKP) shows a compositional bias: basic and acidic residues. A phosphoserine mark is found at S328, S354, S356, S366, and S368. The segment covering 342-367 (PSRRPGRSPKRRSLSPKQRDKSRRSR) has biased composition (basic residues). T385 is subject to Phosphothreonine. S387 is subject to Phosphoserine. Basic and acidic residues-rich tracts occupy residues 395–408 (RSLERKRREPERRR) and 415–429 (RPRDDILGRCERSKD). 3 positions are modified to phosphoserine: S427, S431, and S437. Basic residues predominate over residues 438–497 (PSRRRSRSPIRRRSRSPLRRSRSPRRRSRSPRRRDRSRRSRSRLRRRSRSRGGHRRRSRS). 8 positions are modified to phosphoserine: S518, S519, S520, S565, S569, S576, S578, and S580. The span at 518–535 (SSSDDNLEDFDVEEEDEE) shows a compositional bias: acidic residues. A compositionally biased stretch (low complexity) spans 562–581 (SVPSEPSSPQSSTRSRSPSP). Glycyl lysine isopeptide (Lys-Gly) (interchain with G-Cter in SUMO2) cross-links involve residues K593 and K659. In terms of domain architecture, Protein kinase spans 687–1003 (YNVYGYTGQG…INQALQHAFI (317 aa)). ATP-binding positions include 693-701 (TGQGVFSNV) and K717. An N6-acetyllysine modification is found at K717. D815 (proton acceptor) is an active-site residue. The residue at position 849 (Y849) is a Phosphotyrosine. S852 is modified (phosphoserine).

The protein belongs to the protein kinase superfamily. CMGC Ser/Thr protein kinase family. In terms of assembly, interacts with CLK1 C-terminus. Associates with the U5 snRNP and NCOR1 deacetylase complexes. Identified in the spliceosome C complex. Phosphorylated by CLK1. Autophosphorylated; phosphorylation inhibits interaction with its targets, such as PRPF6 or SMARCA4.

Its subcellular location is the nucleus. It localises to the chromosome. The protein resides in the centromere. The protein localises to the kinetochore. It carries out the reaction L-seryl-[protein] + ATP = O-phospho-L-seryl-[protein] + ADP + H(+). The catalysed reaction is L-threonyl-[protein] + ATP = O-phospho-L-threonyl-[protein] + ADP + H(+). In terms of biological role, serine/threonine kinase involved in spliceosomal assembly as well as mitosis and signaling regulation. Connects chromatin mediated regulation of transcription and pre-mRNA splicing. During spliceosomal assembly, interacts with and phosphorylates PRPF6 and PRPF31, components of the U4/U6-U5 tri-small nuclear ribonucleoprotein (snRNP), to facilitate the formation of the spliceosome B complex. Plays a role in regulating transcription and the spindle assembly checkpoint (SAC). Associates with U5 snRNP and NCOR1 deacetylase complexes which may allow a coordination of pre-mRNA splicing with chromatin remodeling events involved in transcriptional regulation. Associates and probably phosphorylates SMARCA4 and NCOR1. Phosphorylates SRSF1. Associates with kinetochores during mitosis and is necessary for recruitment and maintenance of the checkpoint proteins such as MAD1L1 and MAD12L1 at the kinetochores. Phosphorylates and regulates the activity of the transcription factors such as ELK1 and KLF13. Phosphorylates nuclear YAP1 and WWTR1/TAZ which induces nuclear exclusion and regulates Hippo signaling pathway, involved in tissue growth control. This is Serine/threonine-protein kinase PRP4 homolog (Prp4k) from Rattus norvegicus (Rat).